A 496-amino-acid polypeptide reads, in one-letter code: Endoglucanase (496 aa).

Residues 1–23 (MGYHSVFIAVFLWSSMVCHNGLA) form the signal peptide. Catalysis depends on Asp93, which acts as the Nucleophile. Catalysis depends on residues His415, Asp467, and Glu476.

This sequence belongs to the glycosyl hydrolase 9 (cellulase E) family.

It catalyses the reaction Endohydrolysis of (1-&gt;4)-beta-D-glucosidic linkages in cellulose, lichenin and cereal beta-D-glucans.. Involved in ripening fruit process. The polypeptide is Endoglucanase (Phaseolus vulgaris (Kidney bean)).